Here is a 291-residue protein sequence, read N- to C-terminus: Ribonuclease Z (291 aa).

The Zn(2+) site is built by His61, His63, Asp65, His66, His133, Asp201, and His257. Asp65 (proton acceptor) is an active-site residue.

Belongs to the RNase Z family. In terms of assembly, homodimer. Zn(2+) serves as cofactor.

The catalysed reaction is Endonucleolytic cleavage of RNA, removing extra 3' nucleotides from tRNA precursor, generating 3' termini of tRNAs. A 3'-hydroxy group is left at the tRNA terminus and a 5'-phosphoryl group is left at the trailer molecule.. Functionally, zinc phosphodiesterase, which displays some tRNA 3'-processing endonuclease activity. Probably involved in tRNA maturation, by removing a 3'-trailer from precursor tRNA. This chain is Ribonuclease Z, found in Saccharolobus solfataricus (strain ATCC 35092 / DSM 1617 / JCM 11322 / P2) (Sulfolobus solfataricus).